A 295-amino-acid polypeptide reads, in one-letter code: N-acetylmuramic acid 6-phosphate etherase (295 aa).

The SIS domain occupies 54 to 217; the sequence is VIASFRQGGR…STASMIGIGK (164 aa). The active-site Proton donor is the glutamate 82. Residue glutamate 113 is part of the active site.

This sequence belongs to the GCKR-like family. MurNAc-6-P etherase subfamily. In terms of assembly, homodimer.

It catalyses the reaction N-acetyl-D-muramate 6-phosphate + H2O = N-acetyl-D-glucosamine 6-phosphate + (R)-lactate. It participates in amino-sugar metabolism; N-acetylmuramate degradation. Functionally, specifically catalyzes the cleavage of the D-lactyl ether substituent of MurNAc 6-phosphate, producing GlcNAc 6-phosphate and D-lactate. The protein is N-acetylmuramic acid 6-phosphate etherase of Geobacillus sp. (strain WCH70).